Reading from the N-terminus, the 542-residue chain is 1,3-beta-glucanosyltransferase gas1 (542 aa).

The first 19 residues, 1–19 (MKFSILSLAVAGLVGLAKA), serve as a signal peptide directing secretion. Asparagine 35 is a glycosylation site (N-linked (GlcNAc...) asparagine). Cysteines 70 and 99 form a disulfide. Tyrosine 88 contacts (1,3-beta-D-glucosyl)n. A glycan (N-linked (GlcNAc...) asparagine) is linked at asparagine 91. The (1,3-beta-D-glucosyl)n site is built by asparagine 156 and glutamate 157. Glutamate 157 (proton donor) is an active-site residue. Asparagine 161 carries an N-linked (GlcNAc...) asparagine glycan. Aspartate 198 and arginine 203 together coordinate (1,3-beta-D-glucosyl)n. Intrachain disulfides connect cysteine 212/cysteine 345, cysteine 230/cysteine 261, cysteine 367/cysteine 419, cysteine 376/cysteine 439, and cysteine 395/cysteine 400. A glycan (N-linked (GlcNAc...) asparagine) is linked at asparagine 249. Glutamate 258 acts as the Nucleophile in catalysis. A glycan (N-linked (GlcNAc...) asparagine) is linked at asparagine 279. Tyrosine 290 contributes to the (1,3-beta-D-glucosyl)n binding site. Asparagine 406, asparagine 484, asparagine 502, and asparagine 509 each carry an N-linked (GlcNAc...) asparagine glycan. Residues 490–515 (MSTSYTSGSGSSNSSGSSSNSSSKSS) are disordered. Serine 516 carries GPI-anchor amidated serine lipidation. Residues 517–542 (GASSYNLNMVITFLSVVIGGTAVLFI) constitute a propeptide, removed in mature form.

The protein belongs to the glycosyl hydrolase 72 family. In terms of processing, the GPI-anchor is attached to the protein in the endoplasmic reticulum and serves to target the protein to the cell surface. There, the glucosamine-inositol phospholipid moiety is cleaved off and the GPI-modified mannoprotein is covalently attached via its lipidless GPI glycan remnant to the 1,6-beta-glucan of the outer cell wall layer.

The protein localises to the secreted. It localises to the cell wall. It is found in the membrane. Splits internally a 1,3-beta-glucan molecule and transfers the newly generated reducing end (the donor) to the non-reducing end of another 1,3-beta-glucan molecule (the acceptor) forming a 1,3-beta linkage, resulting in the elongation of 1,3-beta-glucan chains in the cell wall. In Schizosaccharomyces pombe (strain 972 / ATCC 24843) (Fission yeast), this protein is 1,3-beta-glucanosyltransferase gas1 (gas1).